A 534-amino-acid polypeptide reads, in one-letter code: Phosphoenolpyruvate carboxykinase (ATP) (534 aa).

R60, Y195, and K201 together coordinate substrate. ATP is bound by residues K201, H221, and 237–245 (GLSGTGKTT). Mn(2+) contacts are provided by K201 and H221. Residue D258 participates in Mn(2+) binding. Residues E287, R324, and T449 each coordinate ATP. R324 provides a ligand contact to substrate.

It belongs to the phosphoenolpyruvate carboxykinase (ATP) family. Mn(2+) serves as cofactor.

The protein localises to the cytoplasm. It carries out the reaction oxaloacetate + ATP = phosphoenolpyruvate + ADP + CO2. The protein operates within carbohydrate biosynthesis; gluconeogenesis. Functionally, involved in the gluconeogenesis. Catalyzes the conversion of oxaloacetate (OAA) to phosphoenolpyruvate (PEP) through direct phosphoryl transfer between the nucleoside triphosphate and OAA. This is Phosphoenolpyruvate carboxykinase (ATP) from Flavobacterium johnsoniae (strain ATCC 17061 / DSM 2064 / JCM 8514 / BCRC 14874 / CCUG 350202 / NBRC 14942 / NCIMB 11054 / UW101) (Cytophaga johnsonae).